Reading from the N-terminus, the 432-residue chain is Major royal jelly protein 1 (432 aa).

An N-terminal signal peptide occupies residues 1 to 19 (MTRLFMLVCLGIVCQGTTG). Asn-28, Asn-144, and Asn-177 each carry an N-linked (GlcNAc...) asparagine glycan. 3 disulfides stabilise this stretch: Cys-118/Cys-150, Cys-132/Cys-195, and Cys-329/Cys-416. Pro-364 contributes to the 24-methylenecholesterol binding site. His-431 carries the histidine amide; atypical modification. At Leu-432 the chain carries Leucine amide; atypical.

The protein belongs to the major royal jelly protein family. Is present in royal jelly in different forms: monomer (55 kDa), oligomeric subunit (ca. 287-420 kDa), and water-insoluble aggregates in sediment after interaction with fatty acids. Component of the apisin heterooligomer complex consisting of 4 copies of MRJP1 and 4 copies of apisimin, associated with 8 molecules of 24-methylenecholesterol; apisimin forms a bridge connecting two MRJP1 dimers. At low pH multiple apisin octamers stack to form filaments that increase the viscosity of royal jelly; these filaments may be stabilized by bound fatty acid chains. The mandibular gland, where royal jelly is produced, has low pH conditions favouring filament formation, while the higher pH of the insect midgut favors filament disassembly. In terms of processing, N-glycosylated on Asn-28, Asn-144 and Asn-177. Glycosylation is required to prevent apisin multimers from aggregating. Jellein-2 is probably processed to yield jellein-1 and jellein-4. In terms of tissue distribution, found in and secreted from the hypopharyngeal glands of the worker honey bee (at protein level); expression peaks at 12 days post eclosion. Expressed in the brains of worker bees (at protein level); found in antennal lobe, optical lobe and a subpopulation of Kenyon cells in the mushroom body. Found in the ommatidia of worker bees (at protein level). Expressed in the spermatheca of adult queen bees (at protein level); expression levels are higher in mated queens than in virgin queens. Expressed in queen bee ovaries and male drone testes.

The protein localises to the secreted. The protein resides in the cytoplasm. It localises to the cell projection. Its subcellular location is the rhabdomere. It is found in the cytoskeleton. In terms of biological role, most abundant protein component of royal jelly, a substance produced in the hypopharyngeal gland containing proteins, free amino acids, fatty acids, sugars and other nutrients, which is fed to developing larvae by worker nurse bees. Major royal jelly proteins (Mrjps) are high in essential amino acids and probably have a nutritional function in larval food. All larvae are fed some royal jelly (also known as worker jelly) early in their development but it forms the principal source of nutrition for larvae destined to become queen bees. Induces the differentiation of honey bee larvae into queens through an Egfr-mediated signaling pathway. Promotes body size increase by activating p70 S6 kinase, stimulates ovary development by augmenting the titer of vitellogenin (Vg) and juvenile hormone, and reduces developmental time by increasing the activity of mitogen-activated protein kinase and inducing 20-hydroxyecdysone (ecdysterone, 20E) production. Together with apisimin forms the apisin complex that polymerizes at low pH, forming a fiber network and increasing the viscosity of royal jelly. The viscous royal Jelly placed in honeycomb cells containing larvae destined to become queens acts as both a food supply and an adhesive preventing larvae from falling out; queens are reared in special large cells oriented vertically. Produced in the spermatheca of adult queen bees, along with other major royal jelly proteins, where it may act as a nutrient supply for sperm stored by mated queens, or be involved in energy metabolism. Functionally, has antibacterial activity against the Gram-positive bacteria S.aureus ATCC 6535, S.saprophyticus and B.subtilis CCT2471, and the Gram-negative bacteria E.coli CCT1371, E.cloacae ATCC 23355, K.pneumoniae ATCC 13883 and P.aeruginosa ATCC 27853, and antifungal activity against C.albicans. Lack cytolytic activity and does not induce rat peritoneal mast cell degranulation. Lacks antibacterial and antifungal activity. Lacks cytolytic activity and does not induce rat peritoneal mast cell degranulation. In Apis mellifera (Honeybee), this protein is Major royal jelly protein 1.